Reading from the N-terminus, the 221-residue chain is Immunoregulatory peptides (221 aa).

An N-terminal signal peptide occupies residues 1 to 19; sequence MNYLCLVVTLVAVAGAISG. Residues 20–45 constitute a propeptide that is removed on maturation; that stretch reads EKFSDDNTGYQSTPSLRIRTTPGRRR. The disordered stretch occupies residues 21–155; it reads KFSDDNTGYQ…PRTIGPPYTR (135 aa). Polar residues predominate over residues 25–34; the sequence is DNTGYQSTPS. Low complexity predominate over residues 48–69; the sequence is PRTIGPPYTRRTLRTTTDYSTT. 2 stretches are compositionally biased toward polar residues: residues 70 to 85 and 123 to 133; these read VENG…STEK and NGTTPAANSTE. A propeptide spanning residues 191–221 is cleaved from the precursor; the sequence is EISWTFGPLYTWRTTKGYGTTLETTNATSTS.

Salivary glands.

Its subcellular location is the secreted. Functionally, suppress host inflammatory response. Exerts significant anti-inflammatory functions, either by directly inhibiting host secretion of inflammatory factors such as tumor necrosis factor-alpha (TNF), monocyte chemotactic protein-1 (CCL2), and interferon-gamma (IFNG) or by indirectly increasing the secretion of immunosuppressant cytokine of interleukin-10 (IL10). Also potently scavenges free radical in vitro in a rapid manner. All tested concentrations of this peptide have little effect on the cell viability. In vivo, inhibits hind paw adjuvant-induced inflammation in mouse in a dose-dependent manner. In terms of biological role, suppress host inflammatory response. Exerts significant anti-inflammatory functions, either by directly inhibiting host secretion of inflammatory factors such as tumor necrosis factor-alpha (TNF), monocyte chemotactic protein-1 (CCL2), and interferon-gamma (IFNG) or by indirectly increasing the secretion of immunosuppressant cytokine of interleukin-10 (IL10). Also potently scavenges free radical in vitro in a rapid manner. Low concentrations of this peptide have little effect on the cell viability, whereas high concentrations increase the cell viability by 10-20%. In vivo, inhibits hind paw adjuvant-induced inflammation in mouse in a dose-dependent manner. Not studied but probably similar to Hyalomin-B1. In Hyalomma asiaticum asiaticum (Tick), this protein is Immunoregulatory peptides.